A 306-amino-acid polypeptide reads, in one-letter code: Protein-methionine-sulfoxide reductase catalytic subunit MsrP (306 aa).

A signal peptide (tat-type signal) is located at residues 1 to 45 (MLIRHAPDLTDNDVTDHSLYLKRRTLMAGVAGLGVAGASASHAQA). Residues N69, 72 to 73 (YE), C127, T162, N210, R215, and 226 to 228 (GIK) contribute to the Mo-molybdopterin site.

Belongs to the MsrP family. In terms of assembly, heterodimer of a catalytic subunit (MsrP) and a heme-binding subunit (MsrQ). The cofactor is Mo-molybdopterin. Predicted to be exported by the Tat system. The position of the signal peptide cleavage has not been experimentally proven.

Its subcellular location is the periplasm. It carries out the reaction L-methionyl-[protein] + a quinone + H2O = L-methionyl-(S)-S-oxide-[protein] + a quinol. The enzyme catalyses L-methionyl-[protein] + a quinone + H2O = L-methionyl-(R)-S-oxide-[protein] + a quinol. Its function is as follows. Part of the MsrPQ system that repairs oxidized periplasmic proteins containing methionine sulfoxide residues (Met-O), using respiratory chain electrons. Thus protects these proteins from oxidative-stress damage caused by reactive species of oxygen and chlorine generated by the host defense mechanisms. MsrPQ is essential for the maintenance of envelope integrity under bleach stress, rescuing a wide series of structurally unrelated periplasmic proteins from methionine oxidation. The catalytic subunit MsrP is non-stereospecific, being able to reduce both (R-) and (S-) diastereoisomers of methionine sulfoxide. This Caulobacter vibrioides (strain ATCC 19089 / CIP 103742 / CB 15) (Caulobacter crescentus) protein is Protein-methionine-sulfoxide reductase catalytic subunit MsrP.